Consider the following 249-residue polypeptide: Transcriptional activator protein EsaR (249 aa).

One can recognise an HTH luxR-type domain in the interval 174–239 (QSADKTIFSS…QAIRLGVELD (66 aa)). The segment at residues 198–217 (YAEIAAITGISVSTVKFHIK) is a DNA-binding region (H-T-H motif).

This sequence belongs to the autoinducer-regulated transcriptional regulatory protein family.

Functions as a potential OhlL-responsive transcriptional regulator. This is Transcriptional activator protein EsaR (esaR) from Pantoea stewartii subsp. stewartii (Erwinia stewartii).